A 483-amino-acid chain; its full sequence is Xylulose kinase (483 aa).

77–78 is a binding site for substrate; that stretch reads MH. Residue Asp-233 is the Proton acceptor of the active site.

This sequence belongs to the FGGY kinase family.

It carries out the reaction D-xylulose + ATP = D-xylulose 5-phosphate + ADP + H(+). Catalyzes the phosphorylation of D-xylulose to D-xylulose 5-phosphate. The sequence is that of Xylulose kinase from Klebsiella pneumoniae.